A 457-amino-acid polypeptide reads, in one-letter code: Pup--protein ligase (457 aa).

Residue E9 participates in Mg(2+) binding. An ATP-binding site is contributed by R53. Y55 is a Mg(2+) binding site. Residue D57 is the Proton acceptor of the active site. E63 lines the Mg(2+) pocket. The ATP site is built by T66 and W424.

Belongs to the Pup ligase/Pup deamidase family. Pup-conjugating enzyme subfamily.

The enzyme catalyses ATP + [prokaryotic ubiquitin-like protein]-L-glutamate + [protein]-L-lysine = ADP + phosphate + N(6)-([prokaryotic ubiquitin-like protein]-gamma-L-glutamyl)-[protein]-L-lysine.. It functions in the pathway protein degradation; proteasomal Pup-dependent pathway. The protein operates within protein modification; protein pupylation. Its function is as follows. Catalyzes the covalent attachment of the prokaryotic ubiquitin-like protein modifier Pup to the proteasomal substrate proteins, thereby targeting them for proteasomal degradation. This tagging system is termed pupylation. The ligation reaction involves the side-chain carboxylate of the C-terminal glutamate of Pup and the side-chain amino group of a substrate lysine. In Xylanimonas cellulosilytica (strain DSM 15894 / JCM 12276 / CECT 5975 / KCTC 9989 / LMG 20990 / NBRC 107835 / XIL07), this protein is Pup--protein ligase.